The chain runs to 151 residues: Ribonuclease H (151 aa).

The 141-residue stretch at Met1–Glu141 folds into the RNase H type-1 domain. Positions 9, 47, 69, and 133 each coordinate Mg(2+).

It belongs to the RNase H family. In terms of assembly, monomer. Requires Mg(2+) as cofactor.

The protein localises to the cytoplasm. It carries out the reaction Endonucleolytic cleavage to 5'-phosphomonoester.. Functionally, endonuclease that specifically degrades the RNA of RNA-DNA hybrids. This is Ribonuclease H from Rhizobium etli (strain ATCC 51251 / DSM 11541 / JCM 21823 / NBRC 15573 / CFN 42).